A 1715-amino-acid chain; its full sequence is Ubiquitin carboxyl-terminal hydrolase 32 (1715 aa).

EF-hand domains follow at residues 161-196 (IPKNALAGLFNAFDENRDGHIDFKELCCGVSAACRG) and 197-232 (PGVERTRFCFKIFDVDRDGVLSHDETLQMINVLLLV). Ca(2+) contacts are provided by D174, N176, D178, H180, E185, D210, D212, D214, and E221. Residues 314 to 492 (QCKHMENDIV…DNLPLPRQVI (179 aa)) form the DUSP domain. The tract at residues 393–429 (QHDSYSLGSGTGSASGSGSASSGISAGRHCGPVRPGP) is disordered. The span at 408–419 (GSGSASSGISAG) shows a compositional bias: low complexity. A USP domain is found at 677–1675 (TGLHNLGNTC…AAYLLFYERK (999 aa)). C686 (nucleophile) is an active-site residue. Composition is skewed to polar residues over residues 1103-1126 (TESNTSSMSYTNHSGENSMESSLT) and 1150-1164 (YRTSPNDSSGLSTGH). Disordered regions lie at residues 1103–1213 (TESN…PHKA) and 1536–1569 (DEIDAPSKEVKEELPNQTGSTKATASPPPTGNIL). Acidic residues predominate over residues 1171 to 1180 (DVDEQAEEGN). Residues 1188–1209 (DQITTSQPETSSGVYSRRSSQP) are compositionally biased toward polar residues. A compositionally biased stretch (basic and acidic residues) spans 1540–1549 (APSKEVKEEL). A compositionally biased stretch (polar residues) spans 1550–1559 (PNQTGSTKAT). H1633 functions as the Proton acceptor in the catalytic mechanism.

This sequence belongs to the peptidase C19 family. USP20/USP33 subfamily.

It carries out the reaction Thiol-dependent hydrolysis of ester, thioester, amide, peptide and isopeptide bonds formed by the C-terminal Gly of ubiquitin (a 76-residue protein attached to proteins as an intracellular targeting signal).. Deubiquitinating enzyme that acts as an inhibitor of mitophagy probably by counteracting the action of park. Possibly functions by hydrolyzing ubiquitin attached by park on target proteins, thereby reducing park's ability to drive mitophagy. The chain is Ubiquitin carboxyl-terminal hydrolase 32 from Drosophila melanogaster (Fruit fly).